We begin with the raw amino-acid sequence, 429 residues long: Enolase (429 aa).

Residue glutamine 163 coordinates (2R)-2-phosphoglycerate. Glutamate 205 serves as the catalytic Proton donor. Aspartate 242, glutamate 287, and aspartate 314 together coordinate Mg(2+). (2R)-2-phosphoglycerate is bound by residues lysine 339, arginine 368, serine 369, and lysine 390. Lysine 339 acts as the Proton acceptor in catalysis.

The protein belongs to the enolase family. The cofactor is Mg(2+).

It is found in the cytoplasm. The protein resides in the secreted. The protein localises to the cell surface. It carries out the reaction (2R)-2-phosphoglycerate = phosphoenolpyruvate + H2O. The protein operates within carbohydrate degradation; glycolysis; pyruvate from D-glyceraldehyde 3-phosphate: step 4/5. Its function is as follows. Catalyzes the reversible conversion of 2-phosphoglycerate (2-PG) into phosphoenolpyruvate (PEP). It is essential for the degradation of carbohydrates via glycolysis. The protein is Enolase of Cupriavidus pinatubonensis (strain JMP 134 / LMG 1197) (Cupriavidus necator (strain JMP 134)).